Here is a 371-residue protein sequence, read N- to C-terminus: Methylthioribose-1-phosphate isomerase (371 aa).

Substrate is bound by residues 53 to 55, Arg-90, and Gln-203; that span reads RGA. Residue Asp-243 is the Proton donor of the active site. 253–254 is a substrate binding site; sequence NK.

This sequence belongs to the eIF-2B alpha/beta/delta subunits family. MtnA subfamily.

The catalysed reaction is 5-(methylsulfanyl)-alpha-D-ribose 1-phosphate = 5-(methylsulfanyl)-D-ribulose 1-phosphate. The enzyme catalyses 5-deoxy-alpha-D-ribose 1-phosphate = 5-deoxy-D-ribulose 1-phosphate. The protein operates within amino-acid biosynthesis; L-methionine biosynthesis via salvage pathway; L-methionine from S-methyl-5-thio-alpha-D-ribose 1-phosphate: step 1/6. Catalyzes the interconversion of methylthioribose-1-phosphate (MTR-1-P) into methylthioribulose-1-phosphate (MTRu-1-P). Also catalyzes the interconversion of 5-deoxyribose 1-phosphate and 5-deoxyribulose 1-phosphate. Part of a bifunctional DHAP-shunt salvage pathway for SAM by-products. This Escherichia coli O45:K1 (strain S88 / ExPEC) protein is Methylthioribose-1-phosphate isomerase.